Consider the following 163-residue polypeptide: MKEKIPFYNEKEFHDMVKKTKKGTFSGWYIINKNNNSVEFSGSFNRQFKLNKPVIPVNTEYVTRKEFNEYKDSNDQRLTKIETELKSQGQRIQVVEDKVDRLTEVVMVQSQQIKTQGEAMNARMDRFESLVLKSLESIGNTLTDFGKRLDVIETRLDKIDPPK.

This sequence belongs to the UPF0134 family.

In Mycoplasma pneumoniae (strain ATCC 29342 / M129 / Subtype 1) (Mycoplasmoides pneumoniae), this protein is UPF0134 protein MPN_139.